Consider the following 119-residue polypeptide: Large ribosomal subunit protein uL18 (119 aa).

The disordered stretch occupies residues 1-20 (MSQIDKAARRQKIKARSRAT). Positions 9 to 19 (RRQKIKARSRA) are enriched in basic residues.

It belongs to the universal ribosomal protein uL18 family. Part of the 50S ribosomal subunit; part of the 5S rRNA/L5/L18/L25 subcomplex. Contacts the 5S and 23S rRNAs.

In terms of biological role, this is one of the proteins that bind and probably mediate the attachment of the 5S RNA into the large ribosomal subunit, where it forms part of the central protuberance. This is Large ribosomal subunit protein uL18 from Chlorobaculum parvum (strain DSM 263 / NCIMB 8327) (Chlorobium vibrioforme subsp. thiosulfatophilum).